The following is a 222-amino-acid chain: MLSMFMCNNIVDYVDGIVQDIEDEASNNVDHDYVYPLPENMVYRFDKSTNILDYLSTERDHVMMAVRYYMSKQRLDDLYRQLPTKTRSYIDIINIYCDKVSNDYNRDMNIMYDMASTKSFTVYDINNEVNTILMDNKGLGVRLATISFITELGRRCMNPVKTIKMFTLLSHTICDDCFVDYITDISPPDNTIPNTSTREYLKLIGITAIMFATYKTLKYMIG.

The protein belongs to the orthopoxvirus OPG045 family. In terms of assembly, homodimer. Interacts with host pro-apoptotic protein BCL2L11 (via BH3 domain). Interacts with host NLRP1. Interacts with host BAK.

Its subcellular location is the host mitochondrion outer membrane. The protein resides in the host cytoplasm. Plays a role in evading host innate immune response by inhibiting host inflammasome activation. Interacts with and inhibits NLR-mediated interleukin-1 beta/IL1B production in infected cells. At the host mitochondria outer membrane, interacts with the BH3 domain of host BAK and prevents BAK from binding active BAX. In turn, host apoptosis is inhibited. The protein is Apoptosis regulator OPG045 (OPG045) of Homo sapiens (Human).